The primary structure comprises 103 residues: Large ribosomal subunit protein bL21 (103 aa).

It belongs to the bacterial ribosomal protein bL21 family. In terms of assembly, part of the 50S ribosomal subunit. Contacts protein L20.

This protein binds to 23S rRNA in the presence of protein L20. This Saccharophagus degradans (strain 2-40 / ATCC 43961 / DSM 17024) protein is Large ribosomal subunit protein bL21.